Reading from the N-terminus, the 151-residue chain is Deoxyuridine 5'-triphosphate nucleotidohydrolase (151 aa).

Substrate-binding positions include 69-71 (RSG), Asn82, and 86-88 (TID).

The protein belongs to the dUTPase family. The cofactor is Mg(2+).

It carries out the reaction dUTP + H2O = dUMP + diphosphate + H(+). It participates in pyrimidine metabolism; dUMP biosynthesis; dUMP from dCTP (dUTP route): step 2/2. Its function is as follows. This enzyme is involved in nucleotide metabolism: it produces dUMP, the immediate precursor of thymidine nucleotides and it decreases the intracellular concentration of dUTP so that uracil cannot be incorporated into DNA. This Rhodospirillum centenum (strain ATCC 51521 / SW) protein is Deoxyuridine 5'-triphosphate nucleotidohydrolase.